The primary structure comprises 290 residues: Protoheme IX farnesyltransferase 1 (290 aa).

8 helical membrane passes run 8-28, 36-56, 85-105, 108-128, 131-151, 152-172, 211-231, and 269-289; these read ITKPGIIFGNLISVAAGFFLA, FLLLLTTLVGVGLVIASGCVV, AAFVYALVLLLNGTALLFQVV, LSAVVVLLGYVFYVFFYTMWY, NSVYGTLVGSISGAVPPLVGY, LAVTNYISLEATLLFVMFCLW, AYVVAFGVVAIGLFMLGEAGY, and LLVVMGISGVLGLELIPLPFI.

It belongs to the UbiA prenyltransferase family. Protoheme IX farnesyltransferase subfamily.

The protein localises to the cell inner membrane. It carries out the reaction heme b + (2E,6E)-farnesyl diphosphate + H2O = Fe(II)-heme o + diphosphate. It participates in porphyrin-containing compound metabolism; heme O biosynthesis; heme O from protoheme: step 1/1. Converts heme B (protoheme IX) to heme O by substitution of the vinyl group on carbon 2 of heme B porphyrin ring with a hydroxyethyl farnesyl side group. This is Protoheme IX farnesyltransferase 1 from Vibrio campbellii (strain ATCC BAA-1116).